Reading from the N-terminus, the 234-residue chain is Sugar fermentation stimulation protein A (234 aa).

Positions 201 to 220 (LLSEAQNKGVEVLAYKAELS) form a DNA-binding region, H-T-H motif.

It belongs to the SfsA family.

Its function is as follows. Binds to DNA non-specifically. Could be a regulatory factor involved in maltose metabolism. The polypeptide is Sugar fermentation stimulation protein A (Salmonella gallinarum (strain 287/91 / NCTC 13346)).